A 155-amino-acid polypeptide reads, in one-letter code: MLEREDPVMLFAGIRAAQEELGKRVDCRGLNAGTEEPLAIDLQRFTVSLKTAWQAGEKRPTHRRPYRRTKPYPKRPSMLEPFEPQIRAWLEADPALSAAAVLQRLVSADPSRFTKKALRTVQMAVKAWRMEIAGQIILDGDWMKRAPVSQCPQLQ.

Residues 56 to 79 form a disordered region; sequence GEKRPTHRRPYRRTKPYPKRPSML. A compositionally biased stretch (basic residues) spans 60–73; sequence PTHRRPYRRTKPYP.

This is an uncharacterized protein from Sinorhizobium fredii (strain NBRC 101917 / NGR234).